The primary structure comprises 118 residues: Putative pterin-4-alpha-carbinolamine dehydratase (118 aa).

Belongs to the pterin-4-alpha-carbinolamine dehydratase family.

It carries out the reaction (4aS,6R)-4a-hydroxy-L-erythro-5,6,7,8-tetrahydrobiopterin = (6R)-L-erythro-6,7-dihydrobiopterin + H2O. The polypeptide is Putative pterin-4-alpha-carbinolamine dehydratase (Azotobacter vinelandii (strain DJ / ATCC BAA-1303)).